The chain runs to 450 residues: Phosphoglucosamine mutase (450 aa).

Ser101 functions as the Phosphoserine intermediate in the catalytic mechanism. Mg(2+) contacts are provided by Ser101, Asp242, Asp244, and Asp246. Position 101 is a phosphoserine (Ser101).

Belongs to the phosphohexose mutase family. It depends on Mg(2+) as a cofactor. Activated by phosphorylation.

It catalyses the reaction alpha-D-glucosamine 1-phosphate = D-glucosamine 6-phosphate. Catalyzes the conversion of glucosamine-6-phosphate to glucosamine-1-phosphate. The polypeptide is Phosphoglucosamine mutase (Rhodopseudomonas palustris (strain BisB5)).